The following is a 152-amino-acid chain: Lipoprotein signal peptidase (152 aa).

The next 3 membrane-spanning stretches (helical) occupy residues 5 to 25 (LFVLSLILLVALDQLSKFWIV), 61 to 81 (WFFVVITVLVIGYAIYYLATH), and 84 to 104 (LNIWKQLALLLIISGGIGNFI). Active-site residues include aspartate 114 and aspartate 130. Residues 125-145 (IFNVADSYLTVGVILLLICLW) traverse the membrane as a helical segment.

Belongs to the peptidase A8 family.

It localises to the cell membrane. The enzyme catalyses Release of signal peptides from bacterial membrane prolipoproteins. Hydrolyzes -Xaa-Yaa-Zaa-|-(S,diacylglyceryl)Cys-, in which Xaa is hydrophobic (preferably Leu), and Yaa (Ala or Ser) and Zaa (Gly or Ala) have small, neutral side chains.. The protein operates within protein modification; lipoprotein biosynthesis (signal peptide cleavage). Its function is as follows. This protein specifically catalyzes the removal of signal peptides from prolipoproteins. This chain is Lipoprotein signal peptidase, found in Streptococcus pyogenes serotype M1.